Here is a 265-residue protein sequence, read N- to C-terminus: Indole-3-glycerol phosphate synthase (265 aa).

The protein belongs to the TrpC family.

It catalyses the reaction 1-(2-carboxyphenylamino)-1-deoxy-D-ribulose 5-phosphate + H(+) = (1S,2R)-1-C-(indol-3-yl)glycerol 3-phosphate + CO2 + H2O. It functions in the pathway amino-acid biosynthesis; L-tryptophan biosynthesis; L-tryptophan from chorismate: step 4/5. The polypeptide is Indole-3-glycerol phosphate synthase (Xanthomonas euvesicatoria pv. vesicatoria (strain 85-10) (Xanthomonas campestris pv. vesicatoria)).